We begin with the raw amino-acid sequence, 444 residues long: Zeaxanthin 4-ketolase (444 aa).

The interval 408 to 444 (VAGGSSSGGGGEGGKPGAGEHGLLQRQRQLAPVGVMA) is disordered. Gly residues predominate over residues 412 to 427 (SSSGGGGEGGKPGAGE).

It catalyses the reaction all-trans-adonixanthin + 2 AH2 + 2 O2 = all-trans-(3S,3'S)-astaxanthin + 2 A + 3 H2O. It carries out the reaction all-trans-zeaxanthin + 2 AH2 + 2 O2 = all-trans-adonixanthin + 2 A + 3 H2O. The enzyme catalyses echinenone + 2 AH2 + 2 O2 = canthaxanthin + 2 A + 3 H2O. The catalysed reaction is all-trans-beta-carotene + 2 AH2 + 2 O2 = echinenone + 2 A + 3 H2O. The protein operates within carotenoid biosynthesis; astaxanthin biosynthesis. Functionally, involved in the biosynthesis of ketocarotenoids which are powerful anti-oxidative molecules. Catalyzes the conversion of zeaxanthin to astaxanthin via adonixanthin. Catalyzes the conversion of beta-carotene to canthaxanthin via echinenone. This Chlamydomonas reinhardtii (Chlamydomonas smithii) protein is Zeaxanthin 4-ketolase.